The sequence spans 208 residues: Large ribosomal subunit protein uL4 (208 aa).

The disordered stretch occupies residues 44 to 79; it reads QRQGTHKSKERSEISGSTRKIGRQKGGGGARRGDMN.

Belongs to the universal ribosomal protein uL4 family. As to quaternary structure, part of the 50S ribosomal subunit.

In terms of biological role, one of the primary rRNA binding proteins, this protein initially binds near the 5'-end of the 23S rRNA. It is important during the early stages of 50S assembly. It makes multiple contacts with different domains of the 23S rRNA in the assembled 50S subunit and ribosome. Forms part of the polypeptide exit tunnel. The polypeptide is Large ribosomal subunit protein uL4 (Bacteroides thetaiotaomicron (strain ATCC 29148 / DSM 2079 / JCM 5827 / CCUG 10774 / NCTC 10582 / VPI-5482 / E50)).